The chain runs to 147 residues: Hemoglobin subunit epsilon (147 aa).

Residues 3 to 147 (HWSAEEKQLI…VAHALPRKYH (145 aa)) form the Globin domain. The heme b site is built by histidine 64 and histidine 93.

This sequence belongs to the globin family. In terms of assembly, heterotetramer of two epsilon chains and two alpha chains. As to expression, red blood cells.

In terms of biological role, beta-type chain found in early embryos. In Cairina moschata (Muscovy duck), this protein is Hemoglobin subunit epsilon (HBE).